We begin with the raw amino-acid sequence, 321 residues long: Methionyl-tRNA formyltransferase (321 aa).

113–116 (SILP) lines the (6S)-5,6,7,8-tetrahydrofolate pocket.

The protein belongs to the Fmt family.

The catalysed reaction is L-methionyl-tRNA(fMet) + (6R)-10-formyltetrahydrofolate = N-formyl-L-methionyl-tRNA(fMet) + (6S)-5,6,7,8-tetrahydrofolate + H(+). In terms of biological role, attaches a formyl group to the free amino group of methionyl-tRNA(fMet). The formyl group appears to play a dual role in the initiator identity of N-formylmethionyl-tRNA by promoting its recognition by IF2 and preventing the misappropriation of this tRNA by the elongation apparatus. The protein is Methionyl-tRNA formyltransferase of Vibrio atlanticus (strain LGP32) (Vibrio splendidus (strain Mel32)).